The chain runs to 941 residues: MutS protein homolog 1 (941 aa).

Residue 747-754 coordinates ATP; the sequence is GPNMAGKS.

It belongs to the DNA mismatch repair MutS family.

It is found in the cytoplasm. The protein localises to the mitochondrion. Its function is as follows. Involved in mitochondrial DNA repair. The protein is MutS protein homolog 1 (msh1) of Schizosaccharomyces pombe (strain 972 / ATCC 24843) (Fission yeast).